A 274-amino-acid polypeptide reads, in one-letter code: tRNA pseudouridine synthase A (274 aa).

The active-site Nucleophile is the D52. Substrate is bound at residue Y110.

It belongs to the tRNA pseudouridine synthase TruA family. As to quaternary structure, homodimer.

It catalyses the reaction uridine(38/39/40) in tRNA = pseudouridine(38/39/40) in tRNA. Its function is as follows. Formation of pseudouridine at positions 38, 39 and 40 in the anticodon stem and loop of transfer RNAs. This chain is tRNA pseudouridine synthase A, found in Ralstonia nicotianae (strain ATCC BAA-1114 / GMI1000) (Ralstonia solanacearum).